The chain runs to 176 residues: Cytochrome b (176 aa).

3 helical membrane-spanning segments follow: residues phenylalanine 33 to methionine 53, tryptophan 77 to isoleucine 98, and tryptophan 113 to leucine 133. The heme b site is built by histidine 83 and histidine 97.

It belongs to the cytochrome b family. The cytochrome bc1 complex contains 11 subunits: 3 respiratory subunits (MT-CYB, CYC1 and UQCRFS1), 2 core proteins (UQCRC1 and UQCRC2) and 6 low-molecular weight proteins (UQCRH/QCR6, UQCRB/QCR7, UQCRQ/QCR8, UQCR10/QCR9, UQCR11/QCR10 and a cleavage product of UQCRFS1). This cytochrome bc1 complex then forms a dimer. The cofactor is heme b.

The protein localises to the mitochondrion inner membrane. Its function is as follows. Component of the ubiquinol-cytochrome c reductase complex (complex III or cytochrome b-c1 complex) that is part of the mitochondrial respiratory chain. The b-c1 complex mediates electron transfer from ubiquinol to cytochrome c. Contributes to the generation of a proton gradient across the mitochondrial membrane that is then used for ATP synthesis. The polypeptide is Cytochrome b (MT-CYB) (Promops centralis (Big crested mastiff bat)).